The primary structure comprises 445 residues: Solute carrier family 52, riboflavin transporter, member 2 (445 aa).

6 helical membrane-spanning segments follow: residues 14 to 34 (LLVA…WVEL), 47 to 67 (LPSY…VVTL), 86 to 106 (VLGM…APVA), 112 to 132 (VAFL…NVTF), 147 to 167 (FFLG…VQGV), and 196 to 216 (FFWA…GLLL). The tract at residues 228–264 (ELGSGLQVGAPGAEEEVEESSPLQEPPSQAAGTTPGP) is disordered. Over residues 247-258 (SSPLQEPPSQAA) the composition is skewed to low complexity. 5 consecutive transmembrane segments (helical) span residues 277 to 297 (ACLL…LPAV), 312 to 332 (LAVV…MGVL), 339 to 359 (LGGL…LAVL), 366 to 386 (VGTS…LGVF), and 404 to 424 (ALLA…VAMF).

The protein belongs to the riboflavin transporter family. Highly expressed in brain, fetal brain and salivary gland. Weakly expressed in other tissues.

It is found in the cell membrane. It catalyses the reaction riboflavin(in) = riboflavin(out). Riboflavin transport is Na(+)-independent but moderately pH-sensitive. Activity is strongly inhibited by riboflavin analogs, such as lumiflavin. Weakly inhibited by flavin adenine dinucleotide (FAD) and flavin mononucleotide (FMN). Plasma membrane transporter mediating the uptake by cells of the water soluble vitamin B2/riboflavin that plays a key role in biochemical oxidation-reduction reactions of the carbohydrate, lipid, and amino acid metabolism. Humans are unable to synthesize vitamin B2/riboflavin and must obtain it via intestinal absorption. May also act as a receptor for 4-hydroxybutyrate. Functionally, (Microbial infection) In case of infection by retroviruses, acts as a cell receptor to retroviral envelopes similar to the porcine endogenous retrovirus (PERV-A). In Homo sapiens (Human), this protein is Solute carrier family 52, riboflavin transporter, member 2 (SLC52A2).